The primary structure comprises 95 residues: Aspartyl/glutamyl-tRNA(Asn/Gln) amidotransferase subunit C (95 aa).

It belongs to the GatC family. As to quaternary structure, heterotrimer of A, B and C subunits.

It catalyses the reaction L-glutamyl-tRNA(Gln) + L-glutamine + ATP + H2O = L-glutaminyl-tRNA(Gln) + L-glutamate + ADP + phosphate + H(+). The enzyme catalyses L-aspartyl-tRNA(Asn) + L-glutamine + ATP + H2O = L-asparaginyl-tRNA(Asn) + L-glutamate + ADP + phosphate + 2 H(+). Functionally, allows the formation of correctly charged Asn-tRNA(Asn) or Gln-tRNA(Gln) through the transamidation of misacylated Asp-tRNA(Asn) or Glu-tRNA(Gln) in organisms which lack either or both of asparaginyl-tRNA or glutaminyl-tRNA synthetases. The reaction takes place in the presence of glutamine and ATP through an activated phospho-Asp-tRNA(Asn) or phospho-Glu-tRNA(Gln). This chain is Aspartyl/glutamyl-tRNA(Asn/Gln) amidotransferase subunit C, found in Brucella melitensis biotype 2 (strain ATCC 23457).